Consider the following 141-residue polypeptide: Hemoglobin subunit alpha (141 aa).

In terms of domain architecture, Globin spans 1-141; sequence VLSPADKTNV…VSTVLTSKYR (141 aa). At S3 the chain carries Phosphoserine. An N6-succinyllysine modification is found at K7. The residue at position 8 (T8) is a Phosphothreonine. K11 carries the N6-succinyllysine modification. The residue at position 16 (K16) is an N6-acetyllysine; alternate. K16 is modified (N6-succinyllysine; alternate). Y24 is modified (phosphotyrosine). A Phosphoserine modification is found at S35. K40 bears the N6-succinyllysine mark. S49 carries the post-translational modification Phosphoserine. Position 58 (H58) interacts with O2. Heme b is bound at residue H87. Phosphoserine is present on S102. Position 108 is a phosphothreonine (T108). S124 bears the Phosphoserine mark. Residues T134 and T137 each carry the phosphothreonine modification. S138 bears the Phosphoserine mark.

The protein belongs to the globin family. In terms of assembly, heterotetramer of two alpha chains and two beta chains. Red blood cells.

Involved in oxygen transport from the lung to the various peripheral tissues. Its function is as follows. Hemopressin acts as an antagonist peptide of the cannabinoid receptor CNR1. Hemopressin-binding efficiently blocks cannabinoid receptor CNR1 and subsequent signaling. The sequence is that of Hemoglobin subunit alpha (HBA) from Odobenus rosmarus divergens (Pacific walrus).